Consider the following 410-residue polypeptide: Multifunctional CCA protein (410 aa).

Residues Gly-8 and Arg-11 each contribute to the ATP site. The CTP site is built by Gly-8 and Arg-11. 2 residues coordinate Mg(2+): Glu-21 and Asp-23. 3 residues coordinate ATP: Arg-91, Arg-137, and Arg-140. 3 residues coordinate CTP: Arg-91, Arg-137, and Arg-140. Residues Thr-228–Phe-329 enclose the HD domain.

This sequence belongs to the tRNA nucleotidyltransferase/poly(A) polymerase family. Bacterial CCA-adding enzyme type 1 subfamily. As to quaternary structure, monomer. Can also form homodimers and oligomers. It depends on Mg(2+) as a cofactor. The cofactor is Ni(2+).

It carries out the reaction a tRNA precursor + 2 CTP + ATP = a tRNA with a 3' CCA end + 3 diphosphate. The enzyme catalyses a tRNA with a 3' CCA end + 2 CTP + ATP = a tRNA with a 3' CCACCA end + 3 diphosphate. Functionally, catalyzes the addition and repair of the essential 3'-terminal CCA sequence in tRNAs without using a nucleic acid template. Adds these three nucleotides in the order of C, C, and A to the tRNA nucleotide-73, using CTP and ATP as substrates and producing inorganic pyrophosphate. tRNA 3'-terminal CCA addition is required both for tRNA processing and repair. Also involved in tRNA surveillance by mediating tandem CCA addition to generate a CCACCA at the 3' terminus of unstable tRNAs. While stable tRNAs receive only 3'-terminal CCA, unstable tRNAs are marked with CCACCA and rapidly degraded. This chain is Multifunctional CCA protein, found in Legionella pneumophila (strain Paris).